A 443-amino-acid polypeptide reads, in one-letter code: MNQNKPTSKLISDFWKGKTSEELFERAKKVSPGGVHSPVRSFRSVGGTPVFFASAKGATLTDISGKEYIDYCLSFGPLILGHRDPEVEEVVRETTEIAWSFGAAEPYSLELAELISSRVPWAEKVRFVNSGTEAVMSALRVARAATGREKILKFDGCYHGHLDSLLVKAGSGLAGESSSDSAGISATSIANTLVLPLDDEASVERVFETEGKNIAALIIEPLPANYGLLIQRKEFLLKIVETARKYGTLVVFDEVISGFRVGFQGMSGLLGIWPDLVTYGKIIGGGFPVGCYAGKKDLLDLVAPSGPVYQAGTLSANPFGMRAGLATLKKVQRDSIYSVLDDRTKIFTDTMTKLLNKKSNQEWEAVIHSSLFWFRKKTQQPIRRIDLIPEGHKESFAKVFHTFLKNGIYLAPSGYEVGFLSWAHDDEIIAKTLEIADKALKTF.

At Lys281 the chain carries N6-(pyridoxal phosphate)lysine.

It belongs to the class-III pyridoxal-phosphate-dependent aminotransferase family. HemL subfamily. Homodimer. Pyridoxal 5'-phosphate serves as cofactor.

It localises to the cytoplasm. It catalyses the reaction (S)-4-amino-5-oxopentanoate = 5-aminolevulinate. The protein operates within porphyrin-containing compound metabolism; protoporphyrin-IX biosynthesis; 5-aminolevulinate from L-glutamyl-tRNA(Glu): step 2/2. This Leptospira interrogans serogroup Icterohaemorrhagiae serovar Lai (strain 56601) protein is Glutamate-1-semialdehyde 2,1-aminomutase.